A 166-amino-acid chain; its full sequence is Large ribosomal subunit protein uL10 (166 aa).

Belongs to the universal ribosomal protein uL10 family. As to quaternary structure, part of the ribosomal stalk of the 50S ribosomal subunit. The N-terminus interacts with L11 and the large rRNA to form the base of the stalk. The C-terminus forms an elongated spine to which L12 dimers bind in a sequential fashion forming a multimeric L10(L12)X complex.

Its function is as follows. Forms part of the ribosomal stalk, playing a central role in the interaction of the ribosome with GTP-bound translation factors. This Bacillus cereus (strain G9842) protein is Large ribosomal subunit protein uL10.